Consider the following 479-residue polypeptide: FAD-dependent monooxygenase ausM (479 aa).

FAD contacts are provided by Glu40, Gly54, and Arg113. Residue Tyr224 is part of the active site. The N-linked (GlcNAc...) asparagine glycan is linked to Asn289. FAD contacts are provided by Asp316 and Ala329. Residues 449 to 469 (TLPWLVISLPVLASMLCYLVY) form a helical membrane-spanning segment.

This sequence belongs to the paxM FAD-dependent monooxygenase family. FAD serves as cofactor.

The protein localises to the membrane. The protein operates within secondary metabolite biosynthesis; terpenoid biosynthesis. In terms of biological role, FAD-dependent monooxygenase; part of the gene cluster B that mediates the biosynthesis of austinol and dehydroaustinol, two fungal meroterpenoids. The first step of the pathway is the synthesis of 3,5-dimethylorsellinic acid by the polyketide synthase ausA. 3,5-dimethylorsellinic acid is then prenylated by the polyprenyl transferase ausN. Further epoxidation by the FAD-dependent monooxygenase ausM and cyclization by the probable terpene cyclase ausL lead to the formation of protoaustinoid A. Protoaustinoid A is then oxidized to spiro-lactone preaustinoid A3 by the combined action of the FAD-binding monooxygenases ausB and ausC, and the dioxygenase ausE. Acid-catalyzed keto-rearrangement and ring contraction of the tetraketide portion of preaustinoid A3 by ausJ lead to the formation of preaustinoid A4. The aldo-keto reductase ausK, with the help of ausH, is involved in the next step by transforming preaustinoid A4 into isoaustinone which is in turn hydroxylated by the P450 monooxygenase ausI to form austinolide. Finally, the cytochrome P450 monooxygenase ausG modifies austinolide to austinol. Austinol can be further modified to dehydroaustinol which forms a diffusible complex with diorcinol that initiates conidiation. Due to genetic rearrangements of the clusters and the subsequent loss of some enzymes, the end products of the Emericella nidulans austinoid biosynthesis clusters are austinol and dehydroaustinol, even if additional enzymes, such as the O-acetyltransferase ausQ and the cytochrome P450 monooxygenase ausR are still functional. The polypeptide is FAD-dependent monooxygenase ausM (Emericella nidulans (strain FGSC A4 / ATCC 38163 / CBS 112.46 / NRRL 194 / M139) (Aspergillus nidulans)).